We begin with the raw amino-acid sequence, 202 residues long: Thymidylate kinase (202 aa).

7 to 14 provides a ligand contact to ATP; sequence GIDGSGKT.

This sequence belongs to the thymidylate kinase family.

It carries out the reaction dTMP + ATP = dTDP + ADP. In terms of biological role, phosphorylation of dTMP to form dTDP in both de novo and salvage pathways of dTTP synthesis. The polypeptide is Thymidylate kinase (Ehrlichia chaffeensis (strain ATCC CRL-10679 / Arkansas)).